Here is a 240-residue protein sequence, read N- to C-terminus: Manganese transport system ATP-binding protein MntB (240 aa).

In terms of domain architecture, ABC transporter spans 1-233 (MNIQGLTIAY…KIQFAYGDAP (233 aa)). ATP is bound at residue 33–40 (GPNGAGKS).

Belongs to the ABC transporter superfamily.

The protein resides in the cell membrane. Its function is as follows. This protein is probably a component of a manganese permease, a binding protein-dependent, ATP-driven transport system. Probably responsible for energy coupling to the transport system. The polypeptide is Manganese transport system ATP-binding protein MntB (mntB) (Listeria innocua serovar 6a (strain ATCC BAA-680 / CLIP 11262)).